Here is a 145-residue protein sequence, read N- to C-terminus: 3-hydroxyacyl-[acyl-carrier-protein] dehydratase FabZ (145 aa).

The active site involves His-47.

It belongs to the thioester dehydratase family. FabZ subfamily.

It localises to the cytoplasm. The enzyme catalyses a (3R)-hydroxyacyl-[ACP] = a (2E)-enoyl-[ACP] + H2O. Functionally, involved in unsaturated fatty acids biosynthesis. Catalyzes the dehydration of short chain beta-hydroxyacyl-ACPs and long chain saturated and unsaturated beta-hydroxyacyl-ACPs. The sequence is that of 3-hydroxyacyl-[acyl-carrier-protein] dehydratase FabZ from Chromohalobacter salexigens (strain ATCC BAA-138 / DSM 3043 / CIP 106854 / NCIMB 13768 / 1H11).